The chain runs to 91 residues: Small ribosomal subunit protein bS20 (91 aa).

The segment at 1–28 (MANTASAEKRNRQAQKRRARNVQVRTGV) is disordered.

The protein belongs to the bacterial ribosomal protein bS20 family.

In terms of biological role, binds directly to 16S ribosomal RNA. The polypeptide is Small ribosomal subunit protein bS20 (Anaeromyxobacter dehalogenans (strain 2CP-1 / ATCC BAA-258)).